We begin with the raw amino-acid sequence, 274 residues long: Non-homologous end joining protein Ku (274 aa).

The 185-residue stretch at 11–195 folds into the Ku domain; that stretch reads ITFGLVNVPV…KYKITPKELS (185 aa).

This sequence belongs to the prokaryotic Ku family. As to quaternary structure, homodimer. Interacts with LigD.

In terms of biological role, with LigD forms a non-homologous end joining (NHEJ) DNA repair enzyme, which repairs dsDNA breaks with reduced fidelity. Binds linear dsDNA with 5'- and 3'- overhangs but not closed circular dsDNA nor ssDNA. Recruits and stimulates the ligase activity of LigD. The sequence is that of Non-homologous end joining protein Ku from Coxiella burnetii (strain RSA 331 / Henzerling II).